Reading from the N-terminus, the 66-residue chain is Sec-independent protein translocase protein TatA (66 aa).

A helical transmembrane segment spans residues 1–21; it reads MIGGLGMPELIIILVIILIIF. The segment at 45–66 is disordered; the sequence is RDAELNEGDKDDKEKEQEKLDK.

It belongs to the TatA/E family. As to quaternary structure, the Tat system comprises two distinct complexes: a TatABC complex, containing multiple copies of TatA, TatB and TatC subunits, and a separate TatA complex, containing only TatA subunits. Substrates initially bind to the TatABC complex, which probably triggers association of the separate TatA complex to form the active translocon.

Its subcellular location is the cell inner membrane. Part of the twin-arginine translocation (Tat) system that transports large folded proteins containing a characteristic twin-arginine motif in their signal peptide across membranes. TatA could form the protein-conducting channel of the Tat system. The protein is Sec-independent protein translocase protein TatA of Desulforapulum autotrophicum (strain ATCC 43914 / DSM 3382 / VKM B-1955 / HRM2) (Desulfobacterium autotrophicum).